Reading from the N-terminus, the 244-residue chain is Krueppel-like factor 9 (244 aa).

2 disordered regions span residues 24–51 (VPEHGGAPDAERLRLPEREVTKEHGDPG) and 80–142 (SVCS…SEKR). Residues 32 to 51 (DAERLRLPEREVTKEHGDPG) show a composition bias toward basic and acidic residues. S122 is subject to Phosphoserine. 3 consecutive C2H2-type zinc fingers follow at residues 143–167 (HKCPYSGCGKVYGKSSHLKAHYRVH), 173–197 (FPCTWPDCLKKFSRSDELTRHYRTH), and 203–225 (FRCPLCEKRFMRSDHLTKHARRH).

Belongs to the Sp1 C2H2-type zinc-finger protein family. Interacts with ZZEF1.

It localises to the nucleus. Transcription factor that binds to GC box promoter elements. Selectively activates mRNA synthesis from genes containing tandem repeats of GC boxes but represses genes with a single GC box. Acts as an epidermal circadian transcription factor regulating keratinocyte proliferation. The sequence is that of Krueppel-like factor 9 (KLF9) from Sus scrofa (Pig).